The chain runs to 197 residues: Imidazoleglycerol-phosphate dehydratase (197 aa).

This sequence belongs to the imidazoleglycerol-phosphate dehydratase family.

It is found in the cytoplasm. It carries out the reaction D-erythro-1-(imidazol-4-yl)glycerol 3-phosphate = 3-(imidazol-4-yl)-2-oxopropyl phosphate + H2O. It functions in the pathway amino-acid biosynthesis; L-histidine biosynthesis; L-histidine from 5-phospho-alpha-D-ribose 1-diphosphate: step 6/9. This is Imidazoleglycerol-phosphate dehydratase from Saccharophagus degradans (strain 2-40 / ATCC 43961 / DSM 17024).